A 312-amino-acid polypeptide reads, in one-letter code: Ribosomal RNA small subunit methyltransferase H (312 aa).

S-adenosyl-L-methionine contacts are provided by residues 35-37, D55, F79, D100, and Q107; that span reads GGH. Residues 279–312 form a disordered region; that stretch reads LVGKSQRPGPGEVAANPRSRSAVMRVAERTGGAA.

This sequence belongs to the methyltransferase superfamily. RsmH family.

It is found in the cytoplasm. It carries out the reaction cytidine(1402) in 16S rRNA + S-adenosyl-L-methionine = N(4)-methylcytidine(1402) in 16S rRNA + S-adenosyl-L-homocysteine + H(+). Its function is as follows. Specifically methylates the N4 position of cytidine in position 1402 (C1402) of 16S rRNA. The polypeptide is Ribosomal RNA small subunit methyltransferase H (Aromatoleum aromaticum (strain DSM 19018 / LMG 30748 / EbN1) (Azoarcus sp. (strain EbN1))).